Here is a 99-residue protein sequence, read N- to C-terminus: MEIAVIGNSDAVIGFSLAGIKKAYEATSEEELINKINEVMADPNVGILVLHQNDYNRLPKRLQSTLSNSVRPTVIAIGTEQSTEMREKIKRAIGVDLWK.

The protein belongs to the V-ATPase F subunit family. In terms of assembly, has multiple subunits with at least A(3), B(3), C, D, E, F, H, I and proteolipid K(x).

It is found in the cell membrane. In terms of biological role, component of the A-type ATP synthase that produces ATP from ADP in the presence of a proton gradient across the membrane. This is A-type ATP synthase subunit F from Methanothrix thermoacetophila (strain DSM 6194 / JCM 14653 / NBRC 101360 / PT) (Methanosaeta thermophila).